Consider the following 350-residue polypeptide: Renin receptor (350 aa).

Residues M1–G16 form the signal peptide. Topologically, residues N17–E302 are extracellular. Residues Y303–I323 form a helical membrane-spanning segment. Residues T324–D350 are Cytoplasmic-facing. A Mediates retrograde transport to the ER motif is present at residues K346–D350.

In terms of assembly, interacts with renin. Accessory component of the multisubunit proton-transporting vacuolar (V)-ATPase protein pump. Interacts (via N-terminus) with ATP6AP1 (via N-terminus). Interacts with ATP6V0D1; ATP6V0D1 is a V-ATPase complex subunit and the interaction promotes V-ATPase complex assembly. Interacts with TMEM9; TMEM9 is a V-ATPase assembly regulator and the interaction induces the interaction with ATP6V0D1. Interacts with VMA21 (via N-terminus); VMA21 is a V-ATPase accessory component. In terms of processing, phosphorylated. Post-translationally, proteolytically cleaved by a furin-like convertase in the trans-Golgi network to generate N- and C-terminal fragments. Expressed in brain, heart, placenta, liver, kidney and pancreas. Barely detectable in lung and skeletal muscles. In the kidney cortex it is restricted to the mesangium of glomeruli. In the coronary and kidney artery it is expressed in the subendothelium, associated to smooth muscles where it colocalizes with REN. Expressed in vascular structures and by syncytiotrophoblast cells in the mature fetal placenta.

The protein localises to the endoplasmic reticulum membrane. It is found in the lysosome membrane. It localises to the cytoplasmic vesicle. The protein resides in the autophagosome membrane. Its subcellular location is the cell projection. The protein localises to the dendritic spine membrane. It is found in the axon. It localises to the endosome membrane. The protein resides in the clathrin-coated vesicle membrane. Its subcellular location is the secretory vesicle. The protein localises to the synaptic vesicle membrane. In terms of biological role, multifunctional protein which functions as a renin, prorenin cellular receptor and is involved in the assembly of the lysosomal proton-transporting V-type ATPase (V-ATPase) and the acidification of the endo-lysosomal system. May mediate renin-dependent cellular responses by activating ERK1 and ERK2. By increasing the catalytic efficiency of renin in AGT/angiotensinogen conversion to angiotensin I, may also play a role in the renin-angiotensin system (RAS). Through its function in V-type ATPase (v-ATPase) assembly and acidification of the lysosome it regulates protein degradation and may control different signaling pathways important for proper brain development, synapse morphology and synaptic transmission. The protein is Renin receptor of Homo sapiens (Human).